We begin with the raw amino-acid sequence, 901 residues long: Probable inorganic carbon transporter subunit DabA (901 aa).

Residues cysteine 424, aspartate 426, histidine 606, and cysteine 621 each coordinate Zn(2+).

The protein belongs to the inorganic carbon transporter (TC 9.A.2) DabA family. Forms a complex with DabB. Zn(2+) serves as cofactor.

The protein resides in the cell membrane. Part of an energy-coupled inorganic carbon pump. The protein is Probable inorganic carbon transporter subunit DabA of Staphylococcus aureus (strain bovine RF122 / ET3-1).